Here is a 279-residue protein sequence, read N- to C-terminus: Movement protein (279 aa).

Belongs to the cucumovirus movement protein family.

It is found in the host cell junction. The protein localises to the host plasmodesma. Transports viral genome to neighboring plant cells directly through plasmosdesmata, without any budding. The movement protein allows efficient cell to cell propagation, by bypassing the host cell wall barrier. Acts by forming a tubular structure at the host plasmodesmata, enlarging it enough to allow free passage of virion capsids. This Cucumber mosaic virus (strain C7-2) (CMV) protein is Movement protein.